The sequence spans 430 residues: Adenylosuccinate synthetase (430 aa).

GTP-binding positions include 12–18 (GDEGKGK) and 40–42 (GHT). The active-site Proton acceptor is the Asp-13. Mg(2+) contacts are provided by Asp-13 and Gly-40. Residues 13 to 16 (DEGK), 38 to 41 (NAGH), Thr-128, Arg-142, Gln-223, Thr-238, and Arg-302 contribute to the IMP site. His-41 (proton donor) is an active-site residue. A substrate-binding site is contributed by 298-304 (TTTGRPR). GTP contacts are provided by residues Arg-304, 330-332 (SID), and 412-414 (SVG).

It belongs to the adenylosuccinate synthetase family. In terms of assembly, homodimer. Mg(2+) is required as a cofactor.

The protein resides in the cytoplasm. It carries out the reaction IMP + L-aspartate + GTP = N(6)-(1,2-dicarboxyethyl)-AMP + GDP + phosphate + 2 H(+). Its pathway is purine metabolism; AMP biosynthesis via de novo pathway; AMP from IMP: step 1/2. In terms of biological role, plays an important role in the de novo pathway of purine nucleotide biosynthesis. Catalyzes the first committed step in the biosynthesis of AMP from IMP. This chain is Adenylosuccinate synthetase, found in Streptococcus equi subsp. zooepidemicus (strain H70).